The primary structure comprises 112 residues: UPF0122 protein CPE1714 (112 aa).

It belongs to the UPF0122 family.

Functionally, might take part in the signal recognition particle (SRP) pathway. This is inferred from the conservation of its genetic proximity to ftsY/ffh. May be a regulatory protein. The polypeptide is UPF0122 protein CPE1714 (Clostridium perfringens (strain 13 / Type A)).